Reading from the N-terminus, the 4074-residue chain is Fibrocystin (4074 aa).

The first 22 residues, 1–22 (MIVWLISLMSIEILLLAGPALS), serve as a signal peptide directing secretion. N-linked (GlcNAc...) asparagine glycans are attached at residues N54 and N224. Residues 258-310 (EILSVFPETGSLGGKTDIIITGDFFDNPALVTIAGVPCDIRHMSPRKIECTTR) form the IPT/TIG 1 domain. In terms of domain architecture, PA14 spans 323 to 483 (AGNRGLLFEV…TWLNPDVVST (161 aa)). N-linked (GlcNAc...) asparagine glycans are attached at residues N355, N385, N518, N527, N640, N710, N741, N822, N829, N868, N953, N966, N976, N1006, N1059, N1083, N1115, N1134, N1233, N1240, N1274, N1284, N1308, N1319, N1342, N1373, N1445, N1456, N1471, N1490, N1528, N1560, N1578, N1598, N1627, N1694, N1760, N1775, N1789, N1875, N1915, N1941, N1955, N2030, N2111, and N2140. The 57-residue stretch at 944–1000 (SLLIYIFGINFSGDPQALEIMVNKTNCKVIFSNQTNVICQTDLLPVGMHRLFMVVRP) folds into the IPT/TIG 2 domain. IPT/TIG domains lie at 1018-1101 (PRLD…AFTY), 1107-1186 (PVIT…RSPG), and 1199-1274 (SIEP…WAGN). In terms of domain architecture, IPT/TIG 6 spans 1385–1464 (PWIMAISPTH…LNVTVIVNGL (80 aa)). One can recognise an IPT/TIG 7 domain in the interval 1573–1641 (HYFPKNFSIH…LVIEVDGLSY (69 aa)). Positions 1928–2049 (HSWFPERVPQ…PEVTFTHLQA (122 aa)) constitute a G8 1 domain. 5 PbH1 repeats span residues 2245-2267 (TLGLKVDSNIFYNILGHALLVGT), 2288-2322 (EQGNIIRNNVIISISGTEGLSSPEMLTPSGIYILN), 2351-2373 (APLLSFTQNIAHSCTRYGLFIYP), 2383-2404 (RGPTLFQNFTVWGSAGGARISR), and 2405-2427 (SSNLHLKNFQVYSCRDFGIDILE). An N-linked (GlcNAc...) asparagine glycan is attached at N2390. Residues N2431, N2467, N2531, N2549, N2579, N2591, N2749, N2764, N2972, and N3004 are each glycosylated (N-linked (GlcNAc...) asparagine). A PbH1 6 repeat occupies 2460-2483 (RWELIISNTTFVNFDLTDCVSIRT). The G8 2 domain maps to 2743–2869 (EGWGGHNHTI…PKKSWTRLAA (127 aa)). One copy of the PbH1 7 repeat lies at 3029 to 3051 (SHGIILNDNIVFGTVGHGIDLEG). The N-linked (GlcNAc...) asparagine glycan is linked to N3053. A PbH1 8 repeat occupies 3082-3104 (AKDINLYGNVVAGSERIGFHIQG). N-linked (GlcNAc...) asparagine glycans are attached at residues N3136, N3165, N3221, N3484, N3702, N3721, and N3833. The PbH1 9 repeat unit spans residues 3158 to 3183 (ENSVEIENITLVDNSIGLLATVYVSS). Residues 3854-3874 (IILAVSLCSVASWLALCCLVC) traverse the membrane as a helical segment. The segment at 3871–3888 (CLVCCWFRKSKSRKIKSE) is ciliary targeting sequence (CST). Disordered regions lie at residues 3896–3919 (NDQKSHIHMSSKHPRSQETKKEDT), 3943–3965 (NGVSRRKVSRRAVREEGSSREED), and 4031–4074 (LQGQ…QEQL). Composition is skewed to basic and acidic residues over residues 3910–3919 (RSQETKKEDT) and 3954–3965 (AVREEGSSREED). A nuclear localization signal (NLS) region spans residues 3947–3976 (RRKVSRRAVREEGSSREEDVVPAPRIISIT).

As to quaternary structure, interacts with CAMLG. Interacts with PKD2. Interacts (via CST) with ARF4; this interaction allows an efficient PKHD1 trafficking to the cilium. Interacts (via CST) with RAB8A; this interaction controls trafficking through the endomembrane systeme and to the cilium. Interacts (via CST) with TULP3; this interaction allows PKHD1 trafficking to the cilium. Post-translationally, palmitoylated. Palmitoylation facilitates the trafficking to the cilia and membrane targeting. In terms of processing, N-glycosylated. Several proteolytic cleavages occur within the extracellular domain, whereas at least one cleavage occurs within the cytoplasmic domain. Cleaved by a probable proprotein convertase which produces an extracellular domain (polyductin extracellular domain, (PECD)) and a C-terminal fragment (polyductin transmembrane fragment (PTM)) which are tethered together by disulfide bonds. This extracellular domain (PECD) is then shed from the primary cilium by activation of a member of the ADAM metalloproteinase disintegrins family, resulting in concomitant release of an intra-cellular C-terminal fragment (ICD) via a gamma-secretase-dependent process. The proteolytic cleavage of the C-terminal intracellular fragment (ICD) is controlled by cytosolic calcium concentration and activation of PKC.

The protein localises to the cell membrane. Its subcellular location is the cytoplasm. The protein resides in the apical cell membrane. It is found in the cytoskeleton. It localises to the cilium basal body. The protein localises to the cell projection. Its subcellular location is the cilium. The protein resides in the spindle. It is found in the chromosome. It localises to the centromere. The protein localises to the nucleus. Its subcellular location is the secreted. The protein resides in the extracellular exosome. It is found in the endoplasmic reticulum. It localises to the golgi apparatus. Promotes ciliogenesis in renal epithelial cells and therefore participates in the tubules formation and/ or ensures the maintenance of the architecture of the lumen of the kidney. Has an impact on cellular symmetry by ensuring correct bipolar cell division through the regulation of centrosome duplication and mitotic spindle assembly and by maintaining oriented cell division (OCD) during tubular elongation through planar cell polarity (PCP) pathway. During epithelial cell morphogenesis, it also regulates cell-cell and cell-matrix adhesion and participates in cell motility. Promotes cell-cell contact through the positive regulation of PTK2 kinase activity leading to either positive regulation of epithelial cell proliferation through the HRAS/RAF1 pathways, or negative regulation of apoptosis through the PDK1/AKT1 pathway. May act in collecting-duct and biliary differentiation. May participate in the regulation of the cholangiocytes proliferation and the CCN2 production in an CXCL8-dependent manner. The chain is Fibrocystin from Canis lupus familiaris (Dog).